The chain runs to 1358 residues: DNA-directed RNA polymerase subunit beta (1358 aa).

This sequence belongs to the RNA polymerase beta chain family. The RNAP catalytic core consists of 2 alpha, 1 beta, 1 beta' and 1 omega subunit. When a sigma factor is associated with the core the holoenzyme is formed, which can initiate transcription.

It carries out the reaction RNA(n) + a ribonucleoside 5'-triphosphate = RNA(n+1) + diphosphate. Its function is as follows. DNA-dependent RNA polymerase catalyzes the transcription of DNA into RNA using the four ribonucleoside triphosphates as substrates. This chain is DNA-directed RNA polymerase subunit beta, found in Francisella tularensis subsp. holarctica (strain OSU18).